We begin with the raw amino-acid sequence, 36 residues long: F420-dependent NADP reductase (36 aa).

9 to 12 (TGNI) contributes to the NADP(+) binding site.

Belongs to the F420-dependent NADP reductase family. As to quaternary structure, homotetramer.

The enzyme catalyses reduced coenzyme F420-(gamma-L-Glu)(n) + NADP(+) = oxidized coenzyme F420-(gamma-L-Glu)(n) + NADPH + 2 H(+). Catalyzes the reduction of NADP(+) with F420H(2) via hydride transfer, and the reverse reaction, i.e. the reduction of F420 with NADPH. In M.organophilum, an alcohol-fermenting methanogen containing an NADP-dependent alcohol dehydrogenase, is probably involved in the regeneration of F420H(2) required for CO(2) reduction to methane. Thus, during growth on alcohol and CO(2), the F420-dependent NADP reductase probably has the function of coupling the NADP-dependent oxidation of the alcohol to the aldehyde with the F420-dependent reduction of CO(2) to methane. The chain is F420-dependent NADP reductase (fno) from Methanogenium organophilum.